The following is a 953-amino-acid chain: Anion exchange protein 4 (953 aa).

Residues 20–41 (SEQLDGDLGPGSGLDGPSDIDN) are disordered. Helical transmembrane passes span 385-405 (AVLY…GLLG), 413-433 (GVLE…LMAG), 470-490 (VGIW…SLLV), and 501-521 (FCAL…LNLI). A membrane (anion exchange) region spans residues 385-953 (AVLYIYLATV…KAPEINISVN (569 aa)). 2 N-linked (GlcNAc...) asparagine glycosylation sites follow: Asn546 and Asn570. Transmembrane regions (helical) follow at residues 594 to 614 (VPDI…CAIA), 635 to 655 (FSSV…GLAT), 682 to 702 (PWWL…LIFM), 728 to 748 (LFCV…WYVS), 785 to 805 (GLVV…LKFI), 807 to 827 (MPVL…SMQF), and 869 to 889 (LWVI…LGLV). Positions 916 to 927 (KTIPENRPEPEH) are enriched in basic and acidic residues. Positions 916-938 (KTIPENRPEPEHLFSGNDSENSE) are disordered. 2 N-linked (GlcNAc...) asparagine glycosylation sites follow: Asn932 and Asn949.

This sequence belongs to the anion exchanger (TC 2.A.31) family. Expressed in kidney and gastrointestinal tract. In kidney, it is highly expressed in the cortex, expressed at intermediate level in the outer medulla and not expressed in the inner medulla. It is expressed in the cecum, while it is absent in other segments of gastrointestinal tract. Highly expressed in the cortical collecting duct (CCD). Expressed in both alpha-intercalated cells and beta-intercalated cells in the CCD (at protein level).

The protein localises to the basolateral cell membrane. The catalysed reaction is 2 hydrogencarbonate(out) + chloride(in) + Na(+)(out) = 2 hydrogencarbonate(in) + chloride(out) + Na(+)(in). The enzyme catalyses K(+)(in) + 2 hydrogencarbonate(in) + chloride(out) = K(+)(out) + 2 hydrogencarbonate(out) + chloride(in). It catalyses the reaction Li(+)(in) + 2 hydrogencarbonate(in) + chloride(out) = Li(+)(out) + 2 hydrogencarbonate(out) + chloride(in). It carries out the reaction Rb(+)(in) + 2 hydrogencarbonate(in) + chloride(out) = Rb(+)(out) + 2 hydrogencarbonate(out) + chloride(in). The catalysed reaction is Cs(+)(in) + 2 hydrogencarbonate(in) + chloride(out) = Cs(+)(out) + 2 hydrogencarbonate(out) + chloride(in). With respect to regulation, 4,4'-diisothiocyanatodihydrostilbene-2,2'- disulfonic acid (H2DIDS) potently inhibits chloride/hydrogencarbonate antiporter activity with 50% inhibition at about 5 uM. Completely inhibits chloride/hydrogencarbonate antiporter activity at 200 uM of 4,4'-diisothiocyano-trans-stilbene-2,2'-disulfonic acid (DIDS). Its function is as follows. Electroneutral Cl(-)/HCO3(-) antiporter that favors chloride ion entry and efflux of hydrogencarbonate and sodium ion across the basolateral membrane and may participate in salivary secretion. Also mediates Cl(-)/HCO3(-) exchange activity in the presence of K(+) as well as Cs(+), Li(+), and Rb(+). Does not contribute to Cl(-)/HCO3(-) exchanger in the apical membrane of the upper villous epithelium. The polypeptide is Anion exchange protein 4 (Rattus norvegicus (Rat)).